The chain runs to 612 residues: Alpha-glycerophosphate oxidase (612 aa).

Residue Asp21 to Glu49 participates in FAD binding. Basic and acidic residues predominate over residues Glu399–Asp408. Residues Glu399 to Phe418 form a disordered region.

This sequence belongs to the FAD-dependent glycerol-3-phosphate dehydrogenase family. The cofactor is FAD.

It localises to the cytoplasm. The catalysed reaction is sn-glycerol 3-phosphate + O2 = dihydroxyacetone phosphate + H2O2. This Streptococcus pyogenes serotype M6 (strain ATCC BAA-946 / MGAS10394) protein is Alpha-glycerophosphate oxidase (glpO).